The following is a 309-amino-acid chain: Homoserine kinase (309 aa).

88–98 (PLARGLGSSAA) contributes to the ATP binding site.

It belongs to the GHMP kinase family. Homoserine kinase subfamily.

The protein localises to the cytoplasm. It catalyses the reaction L-homoserine + ATP = O-phospho-L-homoserine + ADP + H(+). Its pathway is amino-acid biosynthesis; L-threonine biosynthesis; L-threonine from L-aspartate: step 4/5. Its function is as follows. Catalyzes the ATP-dependent phosphorylation of L-homoserine to L-homoserine phosphate. In Halalkalibacterium halodurans (strain ATCC BAA-125 / DSM 18197 / FERM 7344 / JCM 9153 / C-125) (Bacillus halodurans), this protein is Homoserine kinase.